A 430-amino-acid polypeptide reads, in one-letter code: MGNWTKSIEAFKEAQPLMPGGVNSPVRAFKSVGMNPVYMKEGKGAKIKDIDGNEYIDYVLSWGPLILGHANDVVVEELKKATELGTSFGAPHEYETRLAKLVIERVPSIDVVRMVNSGTEATMSALRLARGYTGRNKILKFVGCYHGHGDSLLIKAGSGVATLGLPDSPGVPESVAQNTLTVHYNDVESVRYVFETFGDDLAAVIVEPVAGNMGVVPPEPGFLETLRTWTEENGTLLIFDEVMTGFRVGYTCAQGEFGVTPDLTCLGKVIGGGLPVGAFGGKREIMEQIAPSGPIYQAGTLSGNPLAMTAGYYTLSQLTKADYSEFARKAERLEAGLSAAAKQHGIPHSINRAGSMIGLFFTDERVYNFEKAQTSDLDLFAAYFRGMLAEGISLAPSQFEGLFLSTAHSNEDIEATIAAAERVFQAIATK.

N6-(pyridoxal phosphate)lysine is present on lysine 268.

This sequence belongs to the class-III pyridoxal-phosphate-dependent aminotransferase family. HemL subfamily. In terms of assembly, homodimer. Pyridoxal 5'-phosphate is required as a cofactor.

It is found in the cytoplasm. The enzyme catalyses (S)-4-amino-5-oxopentanoate = 5-aminolevulinate. Its pathway is porphyrin-containing compound metabolism; protoporphyrin-IX biosynthesis; 5-aminolevulinate from L-glutamyl-tRNA(Glu): step 2/2. This is Glutamate-1-semialdehyde 2,1-aminomutase 2 from Shouchella clausii (strain KSM-K16) (Alkalihalobacillus clausii).